The primary structure comprises 304 residues: Beta-lactamase AER-1 (304 aa).

The signal sequence occupies residues 1-37; that stretch reads MYVLSVEKPTLRNKFAAGIGVVLVCVVASFIPTPVFA. Ser-83 functions as the Acyl-ester intermediate in the catalytic mechanism. A disulfide bridge connects residues Cys-90 and Cys-137. The interval 173–195 is disordered; sequence ETQLDRKEPELNEGTPGDVRDTT. 248–250 contacts substrate; that stretch reads KTG.

This sequence belongs to the class-A beta-lactamase family.

It catalyses the reaction a beta-lactam + H2O = a substituted beta-amino acid. Hydrolyzes carbenicillin. Methicillin and oxacillin are weakly hydrolyzed. This Aeromonas hydrophila protein is Beta-lactamase AER-1 (aer1).